Consider the following 379-residue polypeptide: Centrosomal protein 43 (379 aa).

One can recognise a LisH domain in the interval 70–102 (DGRLVASLVAEFLQFFNLDFTLAVFQPETSTLQ). The disordered stretch occupies residues 139–196 (EKGPTTGEGALDLSDVHPPPKSPEGKTSAQTTPSKKANNEANQSDTSVSLSEPKSKSS). Position 143 is a phosphothreonine (T143). Residues S152 and S160 each carry the phosphoserine modification. Residues 163 to 184 (GKTSAQTTPSKKANNEANQSDT) show a composition bias toward polar residues. A Phosphothreonine modification is found at T170. S182 is subject to Phosphoserine. The segment covering 185 to 196 (SVSLSEPKSKSS) has biased composition (low complexity). T214 carries the phosphothreonine modification. The segment at 216-288 (DGKDKAGLCP…APSLKDSESK (73 aa)) is disordered. Residues 225–236 (PDEDDMEGDSFF) are compositionally biased toward acidic residues. A compositionally biased stretch (basic and acidic residues) spans 239 to 255 (PIPKPEKTYGLRSEPRK). A compositionally biased stretch (low complexity) spans 266–282 (APPLKSGLSSLAGAPSL). 2 positions are modified to phosphoserine: S281 and S306. Position 317 is a phosphotyrosine (Y317).

It belongs to the CEP43 family. As to quaternary structure, homodimer. Part of a ternary complex that contains CEP350, CEP43 and MAPRE1. Interacts directly with CEP350 and MAPRE1. Interacts with CEP19. Interacts (via N-terminus) with CEP350 (via C-terminus).

The protein resides in the cytoplasm. It localises to the cytoskeleton. Its subcellular location is the microtubule organizing center. It is found in the centrosome. The protein localises to the centriole. The protein resides in the cilium basal body. In terms of biological role, required for anchoring microtubules to the centrosomes. Required for ciliation. The polypeptide is Centrosomal protein 43 (CEP43) (Macaca fascicularis (Crab-eating macaque)).